The sequence spans 731 residues: Catalase-peroxidase 2 (731 aa).

Positions 1-10 are enriched in polar residues; that stretch reads MAETPNSDMS. Residues 1 to 26 form a disordered region; it reads MAETPNSDMSGATGGRSKRPKSNQDW. The segment at residues 95 to 218 is a cross-link (tryptophyl-tyrosyl-methioninium (Trp-Tyr) (with M-244)); the sequence is WHSAGTYRTA…LGASVMGLIY (124 aa). His96 (proton acceptor) is an active-site residue. The tryptophyl-tyrosyl-methioninium (Tyr-Met) (with W-95) cross-link spans 218 to 244; it reads YVNPEGPDGNPDPEASAKNIRQTFDRM. His259 contacts heme b.

Homodimer. Requires heme b as cofactor. Formation of the three residue Trp-Tyr-Met cross-link is important for the catalase, but not the peroxidase activity of the enzyme.

It carries out the reaction H2O2 + AH2 = A + 2 H2O. The enzyme catalyses 2 H2O2 = O2 + 2 H2O. Functionally, bifunctional enzyme with both catalase and broad-spectrum peroxidase activity. The sequence is that of Catalase-peroxidase 2 from Haloarcula marismortui (strain ATCC 43049 / DSM 3752 / JCM 8966 / VKM B-1809) (Halobacterium marismortui).